A 111-amino-acid chain; its full sequence is Large ribosomal subunit protein uL22 (111 aa).

The protein belongs to the universal ribosomal protein uL22 family. In terms of assembly, part of the 50S ribosomal subunit.

Its function is as follows. This protein binds specifically to 23S rRNA; its binding is stimulated by other ribosomal proteins, e.g. L4, L17, and L20. It is important during the early stages of 50S assembly. It makes multiple contacts with different domains of the 23S rRNA in the assembled 50S subunit and ribosome. In terms of biological role, the globular domain of the protein is located near the polypeptide exit tunnel on the outside of the subunit, while an extended beta-hairpin is found that lines the wall of the exit tunnel in the center of the 70S ribosome. The protein is Large ribosomal subunit protein uL22 of Geotalea uraniireducens (strain Rf4) (Geobacter uraniireducens).